The sequence spans 1165 residues: Leptin receptor (1165 aa).

An N-terminal signal peptide occupies residues 1 to 21 (MTCPKFSVALLHWEFIYVITA). The Extracellular segment spans residues 22–838 (FDLAYPITPW…TQDGEKHRND (817 aa)). Intrachain disulfides connect Cys37-Cys90, Cys89-Cys99, Cys131-Cys142, Cys186-Cys196, and Cys188-Cys193. Asn41, Asn55, Asn72, Asn80, and Asn98 each carry an N-linked (GlcNAc...) asparagine glycan. N-linked (GlcNAc...) asparagine glycosylation occurs at Asn187. N-linked (GlcNAc...) asparagine glycosylation is found at Asn206, Asn276, Asn347, and Asn397. The Fibronectin type-III 1 domain maps to 239–332 (PPLGLHMEIT…STPFTFTTQD (94 aa)). Disulfide bonds link Cys352–Cys412 and Cys413–Cys418. The N-linked (GlcNAc...) asparagine glycan is linked to Asn433. Intrachain disulfides connect Cys436/Cys447, Cys473/Cys528, and Cys488/Cys498. Residues 467-484 (HRSSLYCSDVPSVHPISE) are leptin-binding. 3 consecutive Fibronectin type-III domains span residues 539 to 634 (PPSS…TVVT), 642 to 736 (GPEF…WPMS), and 740 to 834 (IVQS…DGEK). The WSXWS motif signature appears at 622–626 (WSNWS). N-linked (GlcNAc...) asparagine glycosylation is found at Asn624, Asn659, Asn670, Asn697, Asn728, and Asn750. The helical transmembrane segment at 839–861 (AGLYVIVPIIISSSILLLGTLLM) threads the bilayer. The Cytoplasmic portion of the chain corresponds to 862-1165 (SHQRMKKLFW…MENKMYDLTV (304 aa)). The short motif at 870-878 (FWEDVPNPK) is the Box 1 motif element. Ser881 carries the post-translational modification Phosphoserine. The required for JAK2 activation stretch occupies residues 892-897 (ETFEHL). The interval 897–905 (LFIKHTESV) is required for STAT3 phosphorylation. Tyr986 carries the phosphotyrosine; by JAK2 modification. Position 1079 is a phosphotyrosine (Tyr1079). Tyr1141 carries the phosphotyrosine; by JAK2 modification.

Belongs to the type I cytokine receptor family. Type 2 subfamily. In terms of assembly, present as a mixture of monomers and dimers. The phosphorylated receptor binds a number of SH2 domain-containing proteins such as JAK2, STAT3, PTPN11, and SOCS3. Interaction with SOCS3 inhibits JAK/STAT signaling and MAPK cascade. On ligand binding, phosphorylated on two conserved C-terminal tyrosine residues by JAK2. Tyr-986 is required for complete binding and activation of PTPN11, ERK/FOS activation,for interaction with SOCS3 and SOCS3 mediated inhibition of leptin signaling. Phosphorylation on Tyr-1141 is required for STAT3 binding/activation. Phosphorylation of Tyr-1079 has a more accessory role. Kidney, liver, spleen, lung, brain, testis, uterus, ovary, corpus luteum, theca and granulosa cells.

The protein resides in the cell membrane. It localises to the basolateral cell membrane. Receptor for hormone LEP/leptin. On ligand binding, mediates LEP central and peripheral effects through the activation of different signaling pathways such as JAK2/STAT3 and MAPK cascade/FOS. In the hypothalamus, LEP acts as an appetite-regulating factor that induces a decrease in food intake and an increase in energy consumption by inducing anorexinogenic factors and suppressing orexigenic neuropeptides, also regulates bone mass and secretion of hypothalamo-pituitary-adrenal hormones. In the periphery, increases basal metabolism, influences reproductive function, regulates pancreatic beta-cell function and insulin secretion, is pro-angiogenic and affects innate and adaptive immunity. Control of energy homeostasis and melanocortin production (stimulation of POMC and full repression of AgRP transcription) is mediated by STAT3 signaling, whereas distinct signals regulate NPY and the control of fertility, growth and glucose homeostasis. Involved in the regulation of counter-regulatory response to hypoglycemia by inhibiting neurons of the parabrachial nucleus. Has a specific effect on T lymphocyte responses, differentially regulating the proliferation of naive and memory T-cells. Leptin increases Th1 and suppresses Th2 cytokine production. The chain is Leptin receptor (LEPR) from Sus scrofa (Pig).